A 221-amino-acid chain; its full sequence is Sigma non-opioid intracellular receptor 1 (221 aa).

Residues 1 to 4 (MALW) lie on the Lumenal side of the membrane. A helical membrane pass occupies residues 5 to 27 (RGLRAVLAVAGLAVAVQLLRGWL). The Cytoplasmic portion of the chain corresponds to 28 to 221 (GSKSYVFNRE…STHLSELGFF (194 aa)). Positions 96-103 (SLTEYVLL) are important for ligand-binding. The interval 174–221 (FIPSTLGFALADTIFSTQDFLTLFYTVKVYGKALLLETSTHLSELGFF) is C-terminal hydrophobic region.

This sequence belongs to the ERG2 family. Homotrimer.

It is found in the nucleus inner membrane. Its subcellular location is the nucleus outer membrane. It localises to the nucleus envelope. The protein resides in the cytoplasmic vesicle. The protein localises to the endoplasmic reticulum membrane. It is found in the membrane. In terms of biological role, may function in lipid transport from the endoplasmic reticulum and be involved in a wide array of cellular functions probably through regulation of the biogenesis of lipid microdomains at the plasma membrane. May regulate calcium efflux at the endoplasmic reticulum. In Xenopus tropicalis (Western clawed frog), this protein is Sigma non-opioid intracellular receptor 1 (sigmar1).